The chain runs to 154 residues: MTDRPPTLADFKAPYPEPGPDQTCCIILLEEKPDEEENYRVELIPGRVMEDGLATGTVSGVVREEVIHGWGYSYYVVEMEPLVTTRRSIRSFHRPTRFVPVPTKHFIRYNSQLPVVVYLPHNTELRYRVWTPIDMQKVEPTEPEGLLKIEERAG.

It belongs to the protease inhibitor I11 (ecotin) family.

The protein is Ecotin-like protein 2 of Trypanosoma brucei brucei (strain 927/4 GUTat10.1).